Consider the following 238-residue polypeptide: Ribonuclease PH (238 aa).

The interval 67-87 (PRSTHTRSDREAARGKQSGRT) is disordered. Phosphate contacts are provided by residues arginine 86 and 124–126 (GTR).

This sequence belongs to the RNase PH family. As to quaternary structure, homohexameric ring arranged as a trimer of dimers.

The enzyme catalyses tRNA(n+1) + phosphate = tRNA(n) + a ribonucleoside 5'-diphosphate. Functionally, phosphorolytic 3'-5' exoribonuclease that plays an important role in tRNA 3'-end maturation. Removes nucleotide residues following the 3'-CCA terminus of tRNAs; can also add nucleotides to the ends of RNA molecules by using nucleoside diphosphates as substrates, but this may not be physiologically important. Probably plays a role in initiation of 16S rRNA degradation (leading to ribosome degradation) during starvation. This Ralstonia nicotianae (strain ATCC BAA-1114 / GMI1000) (Ralstonia solanacearum) protein is Ribonuclease PH.